The chain runs to 251 residues: Zinc import ATP-binding protein ZnuC (251 aa).

Positions 5–220 constitute an ABC transporter domain; the sequence is VSLENVSVSF…PEFISMFGPR (216 aa). 37 to 44 is a binding site for ATP; that stretch reads GPNGAGKS.

Belongs to the ABC transporter superfamily. Zinc importer (TC 3.A.1.15.5) family. The complex is composed of two ATP-binding proteins (ZnuC), two transmembrane proteins (ZnuB) and a solute-binding protein (ZnuA).

The protein resides in the cell inner membrane. It catalyses the reaction Zn(2+)(out) + ATP(in) + H2O(in) = Zn(2+)(in) + ADP(in) + phosphate(in) + H(+)(in). In terms of biological role, part of the ABC transporter complex ZnuABC involved in zinc import. Responsible for energy coupling to the transport system. The protein is Zinc import ATP-binding protein ZnuC of Salmonella choleraesuis (strain SC-B67).